Here is an 8892-residue protein sequence, read N- to C-terminus: Nonribosomal peptide synthetase 32 (8892 aa).

One can recognise a Carrier 1 domain in the interval 12 to 85; that stretch reads EPSKLVLGRV…QLAESIAQQN (74 aa). An O-(pantetheine 4'-phosphoryl)serine modification is found at Ser46. Residues 88–112 form a disordered region; the sequence is AGNGVNGHANGNGMNGNGLHNEATI. Over residues 93 to 108 the composition is skewed to low complexity; the sequence is NGHANGNGMNGNGLHN. A condensation 1 region spans residues 567–956; sequence PTSANVPRRV…EGVDLSVRDF (390 aa). Residues 989 to 1386 form an adenylation 1 region; sequence KMAEQPEALA…GRIDSQIKIR (398 aa). The 77-residue stretch at 1523 to 1599 folds into the Carrier 2 domain; sequence ISATAVEREL…ELAAEVQATQ (77 aa). Ser1560 bears the O-(pantetheine 4'-phosphoryl)serine mark. An epimerization 1 region spans residues 1609-2039; it reads GAIALSPIQQ…YGQTVKSLVN (431 aa). Residues 2083-2518 form a condensation 2 region; it reads EDILPCSPIQ…LLLPAEEAKL (436 aa). The adenylation 2 stretch occupies residues 2543 to 2934; sequence SQPEALAVSA…GRRDTQVKIR (392 aa). The region spanning 3061–3137 is the Carrier 3 domain; it reads SSATPIEREL…ELAANSQTGR (77 aa). Residue Ser3098 is modified to O-(pantetheine 4'-phosphoryl)serine. The interval 3153–3590 is epimerization 2; sequence LSPIQQMFFD…GDTVKTLVEE (438 aa). A condensation 3 region spans residues 3634–4061; sequence EDILPCSAIQ…NVDRPLRELT (428 aa). Positions 4098–4488 are adenylation 3; that stretch reads TLPEALAISS…GRIDSQIKIR (391 aa). The region spanning 4627–4703 is the Carrier 4 domain; sequence APTTDLERKL…DLSRVVEEKC (77 aa). The residue at position 4664 (Ser4664) is an O-(pantetheine 4'-phosphoryl)serine. The interval 4760–5181 is condensation 4; sequence EDVYPCSPMQ…LLTDEDCDQL (422 aa). Residues 5205-5605 form an adenylation 4 region; the sequence is TSYPTAPAIS…GRRDTQVKIR (401 aa). The region spanning 5745 to 5821 is the Carrier 5 domain; the sequence is MPTTPMEQKL…DLAEAMEEKG (77 aa). Ser5782 bears the O-(pantetheine 4'-phosphoryl)serine mark. The segment at 5868-6285 is condensation 5; sequence EDVYPCSPLQ…LLSPGQMAQI (418 aa). The adenylation 5 stretch occupies residues 6307 to 6700; it reads QMTTRPAATA…GRIDTQIKIR (394 aa). Residues 6834–6911 form the Carrier 6 domain; sequence ELTTTIERQL…ELATQTQTTE (78 aa). O-(pantetheine 4'-phosphoryl)serine is present on Ser6872. The epimerization 3 stretch occupies residues 6923–7360; sequence NFQLSPIQQM…SYSCAIESLV (438 aa). A condensation 6 region spans residues 7403-7834; the sequence is VQDILPCSPI…LLPAGDANQI (432 aa). Residues 7855 to 8253 are adenylation 6; sequence QQMAAHPTAQ…LDRIGTQVKI (399 aa). The Carrier 7 domain occupies 8380–8456; the sequence is APVGRNEEIL…AMAARVTADI (77 aa). Ser8417 is subject to O-(pantetheine 4'-phosphoryl)serine. Residues 8490–8878 are condensation 7; that stretch reads HFAFDATGPC…EIIEDSGCNV (389 aa).

It belongs to the NRP synthetase family.

It functions in the pathway secondary metabolite biosynthesis. Nonribosomal peptide synthetase; part of the gene cluster that mediates the biosynthesis of the lipopeptides W493 A and B. W493 A and B consist of six amino acid residues D-allo-thr, L-Ala, D-Ala, L-Gln, D-Tyr, and L-Val/L-Ile linked to a 3-hydroxy-4-methyltetradecanoic acid polyketide chain. The biosynthesis starts with formation of the linear polyketide chain by the highly reducing polyketide synthase PKS40. The gene cluster contains a putative acyl-CoA ligase (FPSE_09184) for formation of a CoA thioester polyketide. The thiol bond could be hydrolyzed by the putative thioesterase (FPSE_09186) and then accepted by the first T domain in module 1 of NRPS32. The second T domain is responsible for accepting a threonine, which is adenylated by the A domain and epimerized to the D-allo-threonine formed by the E domain. The five successive modules incorporate Ala, Ala, Gln, Tyr, and Val/Ile into the final product, which is released by cyclization. The chain is Nonribosomal peptide synthetase 32 from Fusarium pseudograminearum (strain CS3096) (Wheat and barley crown-rot fungus).